The primary structure comprises 188 residues: Protein Cripto (188 aa).

A signal peptide spans 1–30; that stretch reads MDCRKMARFSYSVIWIMAISKVFELGLVAG. The EGF-like domain maps to 78-107; that stretch reads LNRTCCLNGGTCMLGSFCACPPSFYGRNCE. N79 carries N-linked (GlcNAc...) asparagine glycosylation. Cystine bridges form between C82–C89, C83–C95, C97–C106, C115–C133, C128–C149, and C131–C140. A lipid anchor (GPI-anchor amidated aspartate) is attached at D150. Positions 151–188 are cleaved as a propeptide — removed in mature form; that stretch reads GLVMDEHLVASRTPELPPSARTTTFMLVGICLSIQSYY.

Belongs to the EGF-CFC (Cripto-1/FRL1/Cryptic) family. In terms of assembly, interacts with the activin type-1 receptor ACVR1B. Post-translationally, the GPI-anchor is attached to the protein in the endoplasmic reticulum and serves to target the protein to the cell surface. There, it is processed by GPI processing phospholipase A2 (TMEM8A), removing an acyl-chain at the sn-2 position of GPI and releasing CRIPTO as a lysophosphatidylinositol-bearing form, which is further cleaved by phospholipase D (GPLD1) into a soluble form. As to expression, preferentially expressed in gastric and colorectal carcinomas than in their normal counterparts. Expressed in breast and lung.

The protein localises to the cell membrane. It localises to the secreted. GPI-anchored cell membrane protein involved in Nodal signaling. Cell-associated CRIPTO acts as a Nodal coreceptor in cis. Shedding of CRIPTO by TMEM8A modulates Nodal signaling by allowing soluble CRIPTO to act as a Nodal coreceptor on other cells. Could play a role in the determination of the epiblastic cells that subsequently give rise to the mesoderm. The protein is Protein Cripto of Homo sapiens (Human).